The sequence spans 172 residues: Transcriptional regulator CdrL (172 aa).

A disordered region spans residues 72 to 113 (SPSAVEEVRTTPASGGRADAEEPGDDGETDAEHADTSATGDE). The DZANK-type zinc finger occupies 116–160 (CSQCGAELSADHVYCPNCGGKATHRVFCECGDEIRADWAFCPRCG).

It belongs to the CdrL family.

The protein localises to the cytoplasm. Its function is as follows. Transcriptional regulator involved in the control of cell division. This Halobacterium salinarum (strain ATCC 29341 / DSM 671 / R1) protein is Transcriptional regulator CdrL.